A 75-amino-acid chain; its full sequence is SPbeta prophage-derived uncharacterized protein YorX (75 aa).

The protein is SPbeta prophage-derived uncharacterized protein YorX (yorX) of Bacillus subtilis (strain 168).